A 331-amino-acid chain; its full sequence is Adenosine deaminase (331 aa).

Residues His-12 and His-14 each coordinate Zn(2+). Substrate contacts are provided by His-14, Asp-16, and Gly-170. Zn(2+) is bound at residue His-197. Glu-200 functions as the Proton donor in the catalytic mechanism. Asp-278 serves as a coordination point for Zn(2+). Asp-279 contributes to the substrate binding site.

It belongs to the metallo-dependent hydrolases superfamily. Adenosine and AMP deaminases family. Adenosine deaminase subfamily. Zn(2+) is required as a cofactor.

It carries out the reaction adenosine + H2O + H(+) = inosine + NH4(+). The catalysed reaction is 2'-deoxyadenosine + H2O + H(+) = 2'-deoxyinosine + NH4(+). Functionally, catalyzes the hydrolytic deamination of adenosine and 2-deoxyadenosine. The polypeptide is Adenosine deaminase (Shewanella oneidensis (strain ATCC 700550 / JCM 31522 / CIP 106686 / LMG 19005 / NCIMB 14063 / MR-1)).